Here is a 109-residue protein sequence, read N- to C-terminus: MSKRDVKAFLYDILESANDVIEFTKDIDYNEFINNKMIRYAVIRALEIIGEASRYINNDFREKFPNVPWKEMVGLRNILIHKYFGIDYILLWKIVKEDVPKIKKEVEIV.

Residues Arg76 and His81 contribute to the active site. An RX(4)HXY motif motif is present at residues Arg76–Tyr83. At Tyr83 the chain carries O-di-AMP-tyrosine.

Belongs to the HepT RNase toxin family. Homodimer, probably forms a complex with cognate antitoxin MJ1379. Post-translationally, modified by cognate antitoxin MJ1379; probably at least 2 successive AMPylation events occur on Tyr-83.

Functionally, probable toxic component of a putative type VII toxin-antitoxin (TA) system, probably an RNase. Probably neutralized by cognate antitoxin MJ1379. Neutralization may be due to AMPylation by antitoxin MJ1379. The polypeptide is Putative RNase MJ1380 (Methanocaldococcus jannaschii (strain ATCC 43067 / DSM 2661 / JAL-1 / JCM 10045 / NBRC 100440) (Methanococcus jannaschii)).